Consider the following 156-residue polypeptide: Transcription elongation factor GreA (156 aa).

A coiled-coil region spans residues 1–84 (MAKYTISKHR…IEDVLRSTDE (84 aa)).

The protein belongs to the GreA/GreB family.

Its function is as follows. Necessary for efficient RNA polymerase transcription elongation past template-encoded arresting sites. The arresting sites in DNA have the property of trapping a certain fraction of elongating RNA polymerases that pass through, resulting in locked ternary complexes. Cleavage of the nascent transcript by cleavage factors such as GreA or GreB allows the resumption of elongation from the new 3'terminus. GreA releases sequences of 2 to 3 nucleotides. The protein is Transcription elongation factor GreA of Ureaplasma parvum serovar 3 (strain ATCC 27815 / 27 / NCTC 11736).